A 156-amino-acid chain; its full sequence is Transcriptional repressor NrdR (156 aa).

The segment at 3–34 (CPFCGSMDTRVLDSRPTLDGTAIRRRRECSSC) is a zinc-finger region. Residues 49-139 (VLVVKKDGRR…VYRDFREVDQ (91 aa)) form the ATP-cone domain.

It belongs to the NrdR family. Requires Zn(2+) as cofactor.

In terms of biological role, negatively regulates transcription of bacterial ribonucleotide reductase nrd genes and operons by binding to NrdR-boxes. The sequence is that of Transcriptional repressor NrdR from Thermotoga maritima (strain ATCC 43589 / DSM 3109 / JCM 10099 / NBRC 100826 / MSB8).